We begin with the raw amino-acid sequence, 91 residues long: Progonadoliberin-1 (91 aa).

A signal peptide spans 1–23 (MEPIPKLLAGLLLLTLCVVGCSS). At Gln24 the chain carries Pyrrolidone carboxylic acid. Gly33 carries the post-translational modification Glycine amide.

The protein belongs to the GnRH family. In terms of processing, the precursor is cleaved by ACE, which removes the Gly-Lys-Arg peptide at the C-terminus, leading to mature hormone. The mature form of Gonadoliberin-1 is also cleaved and degraded by ACE.

It is found in the secreted. Its function is as follows. Stimulates the secretion of gonadotropins; it stimulates the secretion of both luteinizing and follicle-stimulating hormones. In Sus scrofa (Pig), this protein is Progonadoliberin-1 (GNRH1).